Consider the following 24-residue polypeptide: Large ribosomal subunit protein uL10 (24 aa).

Belongs to the universal ribosomal protein uL10 family. In terms of assembly, part of the ribosomal stalk of the 50S ribosomal subunit. The N-terminus interacts with L11 and the large rRNA to form the base of the stalk. The C-terminus forms an elongated spine to which L12 dimers bind in a sequential fashion forming a multimeric L10(L12)X complex.

Functionally, forms part of the ribosomal stalk, playing a central role in the interaction of the ribosome with GTP-bound translation factors. This chain is Large ribosomal subunit protein uL10 (rplJ), found in Enterobacter cloacae.